We begin with the raw amino-acid sequence, 443 residues long: D(2) dopamine receptor (443 aa).

Residues methionine 1–tyrosine 37 lie on the Extracellular side of the membrane. Residues asparagine 5, asparagine 17, and asparagine 23 are each glycosylated (N-linked (GlcNAc...) asparagine). Residues alanine 38–serine 60 traverse the membrane as a helical segment. Residues arginine 61 to asparagine 70 lie on the Cytoplasmic side of the membrane. Residues tyrosine 71–tyrosine 93 traverse the membrane as a helical segment. Topologically, residues leucine 94–aspartate 108 are extracellular. Cysteines 107 and 182 form a disulfide. A helical transmembrane segment spans residues isoleucine 109–isoleucine 130. Topologically, residues aspartate 131–arginine 151 are cytoplasmic. Residues valine 152–phenylalanine 172 traverse the membrane as a helical segment. Residues glycine 173–alanine 188 lie on the Extracellular side of the membrane. The helical transmembrane segment at phenylalanine 189–tyrosine 213 threads the bilayer. The tract at residues lysine 211 to glutamine 373 is interaction with PPP1R9B. Over isoleucine 214–glutamine 373 the chain is Cytoplasmic. Positions methionine 281–lysine 332 are disordered. Residues alanine 323–lysine 332 show a composition bias toward basic and acidic residues. Residues methionine 374–leucine 395 form a helical membrane-spanning segment. The Extracellular portion of the chain corresponds to asparagine 396 to serine 409. Cysteine 399 and cysteine 401 are joined by a disulfide. A helical transmembrane segment spans residues alanine 410–isoleucine 431. Residues glutamate 432–cysteine 443 are Cytoplasmic-facing. The S-palmitoyl cysteine moiety is linked to residue cysteine 443.

Belongs to the G-protein coupled receptor 1 family. As to quaternary structure, forms homo- and heterooligomers with DRD4. The interaction with DRD4 may modulate agonist-induced downstream signaling. Interacts with CADPS and CADPS2. Interacts with GPRASP1, PPP1R9B and CLIC6. Interacts with ARRB2. Interacts with HTR2A. Interacts with GNAI2 isoform sGi2, the interaction allows the creation of an intracellular pool of DRD2 that can be released to cell surface upon agonist stimulation. Interacts with DRD1. Interacts with KCNA2. Post-translationally, palmitoylated. Palmitoylation which is required for proper localization to the plasma membrane and stability of the receptor could be carried on by ZDHHC4, ZDHHC3 and ZDHHC8. Expressed in the anterior pituitary gland.

It localises to the cell membrane. The protein resides in the golgi apparatus membrane. Functionally, dopamine receptor whose activity is mediated by G proteins which inhibit adenylyl cyclase. Positively regulates postnatal regression of retinal hyaloid vessels via suppression of VEGFR2/KDR activity, downstream of OPN5. The chain is D(2) dopamine receptor (DRD2) from Homo sapiens (Human).